The following is a 761-amino-acid chain: Complement factor B (761 aa).

The signal sequence occupies residues Met-1–Met-25. Sushi domains follow at residues Ser-35–Ala-100, Ile-101–Asp-160, and Thr-163–Asp-220. Disulfide bonds link Cys-37–Cys-76, Cys-62–Cys-98, Cys-103–Cys-145, Cys-131–Cys-158, Cys-165–Cys-205, and Cys-191–Cys-218. 2 N-linked (GlcNAc...) asparagine glycosylation sites follow: Asn-122 and Asn-142. Positions Asn-270–Leu-469 constitute a VWFA domain. Mg(2+)-binding residues include Ser-278 and Ser-280. N-linked (GlcNAc...) asparagine glycosylation occurs at Asn-285. Residue Thr-353 participates in Mg(2+) binding. The N-linked (GlcNAc...) asparagine glycan is linked to Asn-378. Residues Leu-477–Gln-754 enclose the Peptidase S1 domain. 5 cysteine pairs are disulfide-bonded: Cys-478-Cys-596, Cys-511-Cys-527, Cys-599-Cys-615, Cys-656-Cys-682, and Cys-695-Cys-725. Catalysis depends on charge relay system residues His-526 and Asp-576. The active-site Charge relay system is the Ser-699.

The protein belongs to the peptidase S1 family. Monomer. Interacts with complement C3b; this interaction is dependent on the presence of Mg(2+). As to quaternary structure, catalytic component of the C3 convertase of the alternative complement pathway, also named C3bBb, composed of complement factor B Bb and complement C3b. Catalytic component of the C5 convertase of the alternative complement pathway, also named C3bBb3b, composed of complement factor B Bb and additional molecules of complement C3b. Interacts to CFP; this interaction contributes to the stabilization of the active C3-convertase enzyme complex. Mg(2+) serves as cofactor. It depends on Mn(2+) as a cofactor. Cleaved by CFD following activation of the alternative complement system, generating Ba and Bb chains. Cleavage and activation takes place when CFB is already associated with complement C3b.

Its subcellular location is the secreted. The protein localises to the cell surface. The enzyme catalyses Cleavage of Arg-|-Ser bond in complement component C3 alpha-chain to yield C3a and C3b, and Arg-|-Xaa bond in complement component C5 alpha-chain to yield C5a and C5b.. Its function is as follows. Precursor of the catalytic component of the C3 and C5 convertase complexes of the alternative pathway of the complement system, a cascade of proteins that leads to phagocytosis and breakdown of pathogens and signaling that strengthens the adaptive immune system. The alternative complement pathway acts as an amplification loop that enhances other complement pathways (classical, lectin and GZMK) by promoting formation of additional C3 and C5 convertases. CFB is cleaved and activated by CFD to generate Ba and Bb chains; Bb chain constituting the catalytic component of the C3 and C5 convertases. Functionally, serine protease component of the complement C3 and C5 convertase complexes of the alternative complement pathway. Following cleavage and activation by factor D (CFD), forms the C3 convertase together with complement C3b. As part of the C3 convertase, cleaves and activates C3 into C3a anaphylatoxin and C3b opsonin, the next components of the complement pathways. When an additional complement C3b molecule binds to the C3 convertase, forms the C5 convertase, which cleaves and activates C5 into C5a anaphylatoxin and C5b component of the membrane attack complex. Involved in proliferation and differentiation of preactivated B-lymphocytes, rapid spreading of peripheral blood monocytes, stimulation of lymphocyte blastogenesis and lysis of erythrocytes. The protein is Complement factor B (CFB) of Bos taurus (Bovine).